The sequence spans 125 residues: Glycine cleavage system H protein (125 aa).

Positions valine 22–lysine 103 constitute a Lipoyl-binding domain. Lysine 63 carries the N6-lipoyllysine modification.

The protein belongs to the GcvH family. In terms of assembly, the glycine cleavage system is composed of four proteins: P, T, L and H. (R)-lipoate serves as cofactor.

The glycine cleavage system catalyzes the degradation of glycine. The H protein shuttles the methylamine group of glycine from the P protein to the T protein. In Bordetella avium (strain 197N), this protein is Glycine cleavage system H protein.